A 167-amino-acid chain; its full sequence is Urease accessory protein UreE (167 aa).

Belongs to the UreE family.

Its subcellular location is the cytoplasm. Involved in urease metallocenter assembly. Binds nickel. Probably functions as a nickel donor during metallocenter assembly. This Pseudomonas aeruginosa (strain UCBPP-PA14) protein is Urease accessory protein UreE.